Here is a 403-residue protein sequence, read N- to C-terminus: Ubiquitin-like modifier-activating enzyme 5 (403 aa).

Gly81, Asp102, Lys125, Asn148, and Asn182 together coordinate ATP. Cys224 and Cys227 together coordinate Zn(2+). Catalysis depends on Cys248, which acts as the Glycyl thioester intermediate. The Zn(2+) site is built by Cys301 and Cys306. Positions 306–315 (CRKQQEEYKK) are enriched in basic and acidic residues. The segment at 306–337 (CRKQQEEYKKRAPAQPTQETAPQEEEEVVHED) is disordered. The UFM1-interacting sequence (UIS) motif lies at 333 to 345 (VVHEDNEWGIELV). The segment at 346–376 (SEVSEEELKNSSGPVPTLPEGITVAYTVPKK) is linker. Phosphoserine occurs at positions 357 and 392. The UFC1-binding sequence (UFC) signature appears at 388–403 (DSGESLEDLMARMKKM).

It belongs to the ubiquitin-activating E1 family. UBA5 subfamily. In terms of assembly, homodimer; homodimerization is required for UFM1 activation. Interacts (via UIS motif) with UFM1; binds UFM1 via a trans-binding mechanism in which UFM1 interacts with distinct sites in both subunits of the UBA5 homodimer. Interacts (via C-terminus) with UFC1. Interacts (via UIS motif) with GABARAPL2 and, with lower affinity, with GABARAP and GABARAPL1.

It localises to the cytoplasm. The protein resides in the nucleus. It is found in the endoplasmic reticulum membrane. Its subcellular location is the golgi apparatus. Functionally, E1-like enzyme which specifically catalyzes the first step in ufmylation. Activates UFM1 by first adenylating its C-terminal glycine residue with ATP, and thereafter linking this residue to the side chain of a cysteine residue in E1, yielding a UFM1-E1 thioester and free AMP. Activates UFM1 via a trans-binding mechanism, in which UFM1 interacts with distinct sites in both subunits of the UBA5 homodimer. Trans-binding also promotes stabilization of the UBA5 homodimer, and enhances ATP-binding. Transfer of UFM1 from UBA5 to the E2-like enzyme UFC1 also takes place using a trans mechanism. Ufmylation plays a key role in various processes, such as ribosome recycling, response to DNA damage, interferon response or reticulophagy (also called ER-phagy). Ufmylation is essential for erythroid differentiation of both megakaryocytes and erythrocytes. The chain is Ubiquitin-like modifier-activating enzyme 5 from Rattus norvegicus (Rat).